A 186-amino-acid polypeptide reads, in one-letter code: uncharacterized protein (186 aa).

Transmembrane regions (helical) follow at residues 42–62 (ISIAISVFSVIGTIVIALSVL), 80–100 (LLFLLNGIATAFLTLYGIGLV), and 131–151 (ICGIFLIMGEALCSVTSFIVL).

This sequence to U.parvum UU008, UU041 and UU042.

The protein resides in the cell membrane. This is an uncharacterized protein from Ureaplasma parvum serovar 3 (strain ATCC 700970).